The primary structure comprises 197 residues: Ion-translocating oxidoreductase complex subunit B (197 aa).

Positions 1–26 are hydrophobic; sequence MSTILIAIIALAVLAAVFGAILGFAS. The region spanning 32–90 is the 4Fe-4S domain; it reads EADPIVDQIDTILPQTQCGQCGYPGCRPYAEAIANGDKINKCPPGGQATIEKLADLMGV. Residues Cys-49, Cys-52, Cys-57, Cys-73, Cys-114, Cys-117, Cys-120, Cys-124, Cys-144, Cys-147, Cys-150, and Cys-154 each contribute to the [4Fe-4S] cluster site. 4Fe-4S ferredoxin-type domains are found at residues 105-134 and 135-164; these read TVAF…GGTK and ALHT…MIPV.

This sequence belongs to the 4Fe4S bacterial-type ferredoxin family. RnfB subfamily. In terms of assembly, the complex is composed of six subunits: RnfA, RnfB, RnfC, RnfD, RnfE and RnfG. Requires [4Fe-4S] cluster as cofactor.

It localises to the cell inner membrane. Its function is as follows. Part of a membrane-bound complex that couples electron transfer with translocation of ions across the membrane. This is Ion-translocating oxidoreductase complex subunit B from Vibrio atlanticus (strain LGP32) (Vibrio splendidus (strain Mel32)).